Here is a 527-residue protein sequence, read N- to C-terminus: Putative ribose/galactose/methyl galactoside import ATP-binding protein 2 (527 aa).

Residues 1 to 31 are disordered; it reads MFTARVARPMAGDDAPAASSGSTGSSAPPAS. Positions 12 to 31 are enriched in low complexity; sequence GDDAPAASSGSTGSSAPPAS. 2 consecutive ABC transporter domains span residues 38-274 and 284-523; these read LEVR…VGRE and VPIG…RIMD. Residue 70–77 coordinates ATP; the sequence is GENGAGKS.

Belongs to the ABC transporter superfamily. Carbohydrate importer 2 (CUT2) (TC 3.A.1.2) family.

The protein localises to the cell inner membrane. The catalysed reaction is D-ribose(out) + ATP + H2O = D-ribose(in) + ADP + phosphate + H(+). It catalyses the reaction D-galactose(out) + ATP + H2O = D-galactose(in) + ADP + phosphate + H(+). Its function is as follows. Part of an ABC transporter complex involved in carbohydrate import. Could be involved in ribose, galactose and/or methyl galactoside import. Responsible for energy coupling to the transport system. This is Putative ribose/galactose/methyl galactoside import ATP-binding protein 2 from Burkholderia lata (strain ATCC 17760 / DSM 23089 / LMG 22485 / NCIMB 9086 / R18194 / 383).